Here is a 493-residue protein sequence, read N- to C-terminus: Tripartite motif-containing protein 5 (493 aa).

An N-acetylalanine modification is found at Ala2. The RING-type zinc finger occupies 15–59 (CPICLELLTQPLSLDCGHSFCQACLTANHEKSMLDKGESSCPVCR). A Phosphoserine modification is found at Ser86. A B box-type zinc finger spans residues 90–132 (QKVDHCARHGEKLLLFCQEDGKVICWLCERSQEHRGHHTFLTE). Cys95, His98, Cys117, and His123 together coordinate Zn(2+). The stretch at 131–240 (TEEVAQECQV…LISDLEHRLQ (110 aa)) forms a coiled coil. The interval 185–198 (FEQLRDILDWEESN) is required for interaction with GABARAP and for autophagy. Residues 281-493 (LKGMLEVFRE…VPMTLCSPSS (213 aa)) form the B30.2/SPRY domain.

The protein belongs to the TRIM/RBCC family. In terms of assembly, can form homodimers and homotrimers. In addition to lower-order dimerization, also exhibits a higher-order multimerization and both low- and high-order multimerizations are essential for its restriction activity. Interacts with BTBD1 and BTBD2. Interacts with PSMC4, PSMC5, PSMD7 and HSPA8/HSC70. Interacts (via B30.2/SPRY domain) with HSPA1A/B. Interacts with PSMC2, MAP3K7/TAK1, TAB2 and TAB3. Interacts with SQSTM1. Interacts with TRIM6 and TRIM34. Interacts with ULK1 (phosphorylated form), GABARAP, GABARAPL1, GABARAPL2, MAP1LC3A, MAP1LC3C and BECN1. In terms of processing, degraded in a proteasome-independent fashion in the absence of viral infection but in a proteasome-dependent fashion following exposure to restriction sensitive virus. Autoubiquitinated in a RING finger- and UBE2D2-dependent manner. Monoubiquitinated by TRIM21. Deubiquitinated by Yersinia YopJ. Ubiquitination may not lead to proteasomal degradation.

It localises to the cytoplasm. It is found in the nucleus. It catalyses the reaction S-ubiquitinyl-[E2 ubiquitin-conjugating enzyme]-L-cysteine + [acceptor protein]-L-lysine = [E2 ubiquitin-conjugating enzyme]-L-cysteine + N(6)-ubiquitinyl-[acceptor protein]-L-lysine.. Its pathway is protein modification; protein ubiquitination. Its function is as follows. Capsid-specific restriction factor that prevents infection from non-host-adapted retroviruses. Blocks viral replication early in the life cycle, after viral entry but before reverse transcription. In addition to acting as a capsid-specific restriction factor, also acts as a pattern recognition receptor that activates innate immune signaling in response to the retroviral capsid lattice. Binding to the viral capsid triggers its E3 ubiquitin ligase activity, and in concert with the heterodimeric ubiquitin conjugating enzyme complex UBE2V1-UBE2N (also known as UBC13-UEV1A complex) generates 'Lys-63'-linked polyubiquitin chains, which in turn are catalysts in the autophosphorylation of the MAP3K7/TAK1 complex (includes TAK1, TAB2, and TAB3). Activation of the MAP3K7/TAK1 complex by autophosphorylation results in the induction and expression of NF-kappa-B and MAPK-responsive inflammatory genes, thereby leading to an innate immune response in the infected cell. Plays a role in regulating autophagy through activation of autophagy regulator BECN1 by causing its dissociation from its inhibitors BCL2 and TAB2. This chain is Tripartite motif-containing protein 5 (TRIM5), found in Gorilla gorilla gorilla (Western lowland gorilla).